The sequence spans 90 residues: Small ribosomal subunit protein bS16 (90 aa).

The protein belongs to the bacterial ribosomal protein bS16 family.

In Lactiplantibacillus plantarum (strain ATCC BAA-793 / NCIMB 8826 / WCFS1) (Lactobacillus plantarum), this protein is Small ribosomal subunit protein bS16.